The primary structure comprises 393 residues: Chorismate synthase (393 aa).

Positions 40 and 46 each coordinate NADP(+). FMN contacts are provided by residues 135 to 137 (RAS), 257 to 258 (QA), Gly-301, 316 to 320 (KPIAT), and Arg-342. Positions 280-306 (DEIDVGPDGIRRRSNRAGGVEGGMSTG) are disordered.

Belongs to the chorismate synthase family. As to quaternary structure, homotetramer. The cofactor is FMNH2.

The catalysed reaction is 5-O-(1-carboxyvinyl)-3-phosphoshikimate = chorismate + phosphate. It participates in metabolic intermediate biosynthesis; chorismate biosynthesis; chorismate from D-erythrose 4-phosphate and phosphoenolpyruvate: step 7/7. Catalyzes the anti-1,4-elimination of the C-3 phosphate and the C-6 proR hydrogen from 5-enolpyruvylshikimate-3-phosphate (EPSP) to yield chorismate, which is the branch point compound that serves as the starting substrate for the three terminal pathways of aromatic amino acid biosynthesis. This reaction introduces a second double bond into the aromatic ring system. The sequence is that of Chorismate synthase from Thermobifida fusca (strain YX).